We begin with the raw amino-acid sequence, 331 residues long: Phosphoenolpyruvate transferase (331 aa).

D63 provides a ligand contact to 7,8-didemethyl-8-hydroxy-5-deazariboflavin.

It belongs to the CofD family. Homodimer. Requires Mg(2+) as cofactor.

The enzyme catalyses enolpyruvoyl-2-diphospho-5'-guanosine + 7,8-didemethyl-8-hydroxy-5-deazariboflavin = dehydro coenzyme F420-0 + GMP + H(+). Its pathway is cofactor biosynthesis; coenzyme F420 biosynthesis. Functionally, catalyzes the transfer of the phosphoenolpyruvate moiety from enoylpyruvoyl-2-diphospho-5'-guanosine (EPPG) to 7,8-didemethyl-8-hydroxy-5-deazariboflavin (FO) with the formation of dehydro coenzyme F420-0 and GMP. The chain is Phosphoenolpyruvate transferase from Mycobacterium bovis (strain ATCC BAA-935 / AF2122/97).